A 1087-amino-acid polypeptide reads, in one-letter code: Platelet-derived growth factor receptor alpha (1087 aa).

The first 24 residues, 1–24, serve as a signal peptide directing secretion; it reads MMPAMRASLILGCLLIIGPWAILA. Over 25–530 the chain is Extracellular; that stretch reads ENPLPTIFPD…PTLRSELTVA (506 aa). Ig-like C2-type domains lie at 27 to 114 and 118 to 211; these read PLPT…SEIE and IYIY…LQTW. C50 and C101 are disulfide-bonded. N-linked (GlcNAc...) asparagine glycosylation is found at N77 and N104. A disulfide bridge links C151 with C192. N216, N282, N309, N356, N362, N461, and N471 each carry an N-linked (GlcNAc...) asparagine glycan. Ig-like C2-type domains follow at residues 217–309, 315–409, and 417–519; these read ISVE…KKTN, KGFI…KSYS, and PALI…LKLV. Cysteines 238 and 293 form a disulfide. C438 and C503 form a disulfide bridge. The chain crosses the membrane as a helical span at residues 531 to 551; it reads AAVLVLLVIVIISLIVLVIIW. Residues 552-1087 lie on the Cytoplasmic side of the membrane; sequence KQKPRYEIRW…SSDLVEDSFL (536 aa). Residues Y574 and Y576 each carry the phosphotyrosine; by autocatalysis modification. The Protein kinase domain occupies 595–970; sequence LVLGRILGSG…CYETVLHDFL (376 aa). Residues 601–609 and K629 each bind ATP; that span reads LGSGAFGKV. Phosphotyrosine; by autocatalysis occurs at positions 722, 733, 744, 756, and 764. The active-site Proton acceptor is the D818. Phosphotyrosine; by autocatalysis occurs at positions 849, 988, and 1017. Residues 1017–1064 form a disordered region; that stretch reads YIIPLPDIDPVSEDESGKRNRHSSQTSEESAIETGSSSSTFIKRDDET. Residues 1039-1057 are compositionally biased toward polar residues; that stretch reads SSQTSEESAIETGSSSSTF.

It belongs to the protein kinase superfamily. Tyr protein kinase family. CSF-1/PDGF receptor subfamily. Interacts with homodimeric pdgfa, pdgfb and pdgfc, and with heterodimers formed by pdgfa and pdgfb. Monomer in the absence of bound ligand. Interaction with dimeric pdgfa, pdgfb and/or pdgfc leads to receptor dimerization, where both pdgfra homodimers and heterodimers with pdgfrb are observed. Ubiquitinated, leading to its internalization and degradation. Post-translationally, autophosphorylated on tyrosine residues upon ligand binding. Autophosphorylation occurs in trans, i.e. one subunit of the dimeric receptor phosphorylates tyrosine residues on the other subunit.

It localises to the cell membrane. The protein resides in the cell projection. The protein localises to the cilium. Its subcellular location is the golgi apparatus. The catalysed reaction is L-tyrosyl-[protein] + ATP = O-phospho-L-tyrosyl-[protein] + ADP + H(+). With respect to regulation, present in an inactive conformation in the absence of bound ligand. Binding of pdgfa and/or pdgfb leads to dimerization and activation by autophosphorylation on tyrosine residues. Functionally, tyrosine-protein kinase that acts as a cell-surface receptor for pdgfa, pdgfb and pdgfc and plays an essential role in the regulation of embryonic development, cell proliferation, survival and chemotaxis. Depending on the context, promotes or inhibits cell proliferation and cell migration. Plays an important role in the differentiation of bone marrow-derived mesenchymal stem cells. Required for normal skeleton development. Required for normal development of the gastrointestinal tract. Plays a role in cell migration and chemotaxis in wound healing. Plays a role in platelet activation, secretion of agonists from platelet granules, and in thrombin-induced platelet aggregation. Binding of its cognate ligands - homodimeric pdgfa, homodimeric pdgfb, heterodimers formed by pdgfa and pdgfb or homodimeric pdgfc -leads to the activation of several signaling cascades; the response depends on the nature of the bound ligand and is modulated by the formation of heterodimers between pdgfra and pdgfrb. Phosphorylates pik3r1, plcg1, and ptpn11. Activation of plcg1 leads to the production of the cellular signaling molecules diacylglycerol and inositol 1,4,5-trisphosphate, mobilization of cytosolic Ca(2+) and the activation of protein kinase C. Phosphorylates pik3r1, the regulatory subunit of phosphatidylinositol 3-kinase, and thereby mediates activation of the akt1 signaling pathway. Mediates activation of hras and of the MAP kinases mapk1/erk2 and/or mapk3/erk1. Promotes activation of stat family members stat1, stat3 and stat5a and/or stat5b. Receptor signaling is down-regulated by protein phosphatases that dephosphorylate the receptor and its down-stream effectors, and by rapid internalization of the activated receptor. The sequence is that of Platelet-derived growth factor receptor alpha (pdgfra) from Xenopus laevis (African clawed frog).